A 402-amino-acid polypeptide reads, in one-letter code: NADH-quinone oxidoreductase subunit D (402 aa).

The protein belongs to the complex I 49 kDa subunit family. In terms of assembly, NDH-1 is composed of 14 different subunits. Subunits NuoB, C, D, E, F, and G constitute the peripheral sector of the complex.

The protein localises to the cell inner membrane. The catalysed reaction is a quinone + NADH + 5 H(+)(in) = a quinol + NAD(+) + 4 H(+)(out). In terms of biological role, NDH-1 shuttles electrons from NADH, via FMN and iron-sulfur (Fe-S) centers, to quinones in the respiratory chain. The immediate electron acceptor for the enzyme in this species is believed to be ubiquinone. Couples the redox reaction to proton translocation (for every two electrons transferred, four hydrogen ions are translocated across the cytoplasmic membrane), and thus conserves the redox energy in a proton gradient. The polypeptide is NADH-quinone oxidoreductase subunit D (Cereibacter sphaeroides (strain ATCC 17025 / ATH 2.4.3) (Rhodobacter sphaeroides)).